Here is a 147-residue protein sequence, read N- to C-terminus: Ribosome maturation factor RimP (147 aa).

This sequence belongs to the RimP family.

It localises to the cytoplasm. Required for maturation of 30S ribosomal subunits. This Thermosipho melanesiensis (strain DSM 12029 / CIP 104789 / BI429) protein is Ribosome maturation factor RimP.